The following is a 223-amino-acid chain: 7-carboxy-7-deazaguanine synthase (223 aa).

Substrate contacts are provided by residues 12–14 (LQG) and Arg27. One can recognise a Radical SAM core domain in the interval 18 to 223 (FTGVPAIFIR…MQTHKYLNIA (206 aa)). Cys31, Cys35, and Cys38 together coordinate [4Fe-4S] cluster. Residue Thr40 coordinates Mg(2+). Thr92 contacts substrate. Residues Gly94 and 136-138 (SPK) each bind S-adenosyl-L-methionine.

This sequence belongs to the radical SAM superfamily. 7-carboxy-7-deazaguanine synthase family. Homodimer. It depends on [4Fe-4S] cluster as a cofactor. The cofactor is S-adenosyl-L-methionine. Requires Mg(2+) as cofactor.

It catalyses the reaction 6-carboxy-5,6,7,8-tetrahydropterin + H(+) = 7-carboxy-7-deazaguanine + NH4(+). It functions in the pathway purine metabolism; 7-cyano-7-deazaguanine biosynthesis. Catalyzes the complex heterocyclic radical-mediated conversion of 6-carboxy-5,6,7,8-tetrahydropterin (CPH4) to 7-carboxy-7-deazaguanine (CDG), a step common to the biosynthetic pathways of all 7-deazapurine-containing compounds. This is 7-carboxy-7-deazaguanine synthase from Escherichia coli (strain K12).